Here is a 250-residue protein sequence, read N- to C-terminus: MSNDPTHQFLIQKIVPIEVGGIDFSFTNASLFMAASAAVAVGFLYFATSNRAIVPGRSQSVAEMSYEFIANMLKEGAGKQGMKFFPLVFSLFMFVLTANLLGMFPYFFTVTSQIIVTFALAILVIGTVLVYGFYKHGFHFLNVFVPSGVPGILLPLVVAIEIISFLSRPISLSVRLFANMLAGHITLKVFAGFVASLGALGAVGVGGAVLPLIMTVALTGLEFLVAFLQAYVFAVLTCMYLNDAIHPGGH.

The next 6 membrane-spanning stretches (helical) occupy residues Ala-29–Ser-49, Phe-84–Phe-104, Ile-114–Tyr-134, Val-143–Ile-163, Phe-193–Ile-213, and Val-216–Leu-236.

The protein belongs to the ATPase A chain family. In terms of assembly, F-type ATPases have 2 components, CF(1) - the catalytic core - and CF(0) - the membrane proton channel. CF(1) has five subunits: alpha(3), beta(3), gamma(1), delta(1), epsilon(1). CF(0) has three main subunits: a(1), b(2) and c(9-12). The alpha and beta chains form an alternating ring which encloses part of the gamma chain. CF(1) is attached to CF(0) by a central stalk formed by the gamma and epsilon chains, while a peripheral stalk is formed by the delta and b chains.

It is found in the cell inner membrane. Functionally, key component of the proton channel; it plays a direct role in the translocation of protons across the membrane. The polypeptide is ATP synthase subunit a (Rhizobium etli (strain CIAT 652)).